The following is a 90-amino-acid chain: MAPALRSLLSPRTLLLLLLSLALLGARAEPATGSAVPAQSRPCVDCHAFEFMQRALQDLRKTAYSLDARTETLLLQAERRALCACWPAGR.

An N-terminal signal peptide occupies residues 1–28 (MAPALRSLLSPRTLLLLLLSLALLGARA).

This sequence belongs to the NICOL family. In terms of assembly, interacts with NELL2; triggers epididymal differentiation. Interacts with cell surface receptor TFRC; the interaction mediates uptake of NICOL1 into fibroblasts. In terms of tissue distribution, expression is enriched in both male and female reproductive organs, including the testis, epididymis, seminal vesicles, coagulating glands, ovary and uterus, and in various non-reproductive organs such as brain, thymus and liver. In testis, expressed in both germ cells and Sertoli cells. Also expressed at low levels in the kidney. Expressed during neocortex and cerebellum development.

The protein localises to the secreted. It localises to the cytoplasm. It is found in the perinuclear region. In terms of biological role, mRNA-binding protein which interacts with a range of target mRNAs including SERPINE1, ACTA2, CCN2 and COL4A1 and may promote extracellular matrix production. Binds to the 3'-UTR of SERPINE1 mRNA and stabilizes the mRNA, possibly by competing for binding with SERBP1 and preventing SERBP1-mediated mRNA degradation. Also binds to the 3'-UTR of ACTA2. Testis-derived lumicrine factor that triggers epididymal differentiation and sperm maturation. This Mus musculus (Mouse) protein is NELL2-interacting cell ontogeny regulator 1.